A 273-amino-acid polypeptide reads, in one-letter code: Putative inactive beta-glucuronidase protein GUSBP11 (273 aa).

Residues 1–20 form a disordered region; the sequence is MTAAETGRGKPRLGGGSGLG.

This sequence belongs to the glycosyl hydrolase 2 family.

The sequence is that of Putative inactive beta-glucuronidase protein GUSBP11 (GUSBP11) from Homo sapiens (Human).